The primary structure comprises 878 residues: uncharacterized protein (878 aa).

Disordered stretches follow at residues 58–223 (IGVD…RTKF), 306–494 (KGRL…TSSR), 585–652 (KLLE…SGKL), and 679–709 (PSSM…GGGG). Low complexity-rich tracts occupy residues 64-213 (NGNS…SGTS), 314-325 (SNSSQSSDSDYS), and 335-355 (IPNS…PNSN). The span at 362-372 (RNPNQLSSTNV) shows a compositional bias: polar residues. Positions 373–494 (NNNINNSGGS…TPTTPVTSSR (122 aa)) are enriched in low complexity. Positions 585–595 (KLLEQQKEQQQ) are enriched in basic and acidic residues. A compositionally biased stretch (low complexity) spans 596 to 605 (KEQQQQQKQQ). A compositionally biased stretch (acidic residues) spans 615 to 624 (TDDEDEDDDE). Low complexity-rich tracts occupy residues 639–652 (NLSN…SGKL) and 679–704 (PSSM…SSSS).

This is an uncharacterized protein from Dictyostelium discoideum (Social amoeba).